A 704-amino-acid polypeptide reads, in one-letter code: Protein cueball (704 aa).

Positions 1-26 are cleaved as a signal peptide; it reads MKSPCRAAAGWLVLLLSSCCLGYVIA. Residues 27-594 lie on the Extracellular side of the membrane; sequence TEWAAAVTTD…TYCKESFNRT (568 aa). LDL-receptor class B repeat units follow at residues 69–119, 120–166, 199–242, and 243–288; these read GKLY…DHLE, RRLY…EATT, RHLY…DHYR, and NRLY…KNDY. N152 and N219 each carry an N-linked (GlcNAc...) asparagine glycan. EGF-like domains follow at residues 363 to 397, 432 to 478, and 514 to 551; these read TQQQGQLTVCLNNGTVNHHTNTCLCQPAFGGKLCE, DRNR…ARCE, and EEYSCNNYCLNGGHCTLGNETTVPECECGEEFAGQRCE. Intrachain disulfides connect C372/C385, C387/C396, C436/C446, C440/C465, C467/C477, C518/C528, C522/C539, and C541/C550. N375 carries an N-linked (GlcNAc...) asparagine glycan. N450 carries N-linked (GlcNAc...) asparagine glycosylation. An N-linked (GlcNAc...) asparagine glycan is attached at N532. An N-linked (GlcNAc...) asparagine glycan is attached at N592. A helical transmembrane segment spans residues 595–615; sequence VVYTSLCFTVSFALLLAVVLV. Residues 616–704 lie on the Cytoplasmic side of the membrane; that stretch reads VSRMMKPPRP…NCGDGTAERK (89 aa).

It belongs to the cueball family.

The protein localises to the cell membrane. Its function is as follows. Has a role in spermatogenesis and oogenesis. The sequence is that of Protein cueball from Anopheles gambiae (African malaria mosquito).